Reading from the N-terminus, the 320-residue chain is Beta-sarcoglycan (320 aa).

Low complexity predominate over residues M1–A10. Residues M1 to V34 form a disordered region. The Cytoplasmic segment spans residues M1 to A67. A compositionally biased stretch (basic and acidic residues) spans S23–V34. Residues I68–I88 traverse the membrane as a helical; Signal-anchor for type II membrane protein segment. Residues W89–H320 are Extracellular-facing. 3 N-linked (GlcNAc...) asparagine glycosylation sites follow: N160, N213, and N260. Cystine bridges form between C290–C316 and C292–C309.

Belongs to the sarcoglycan beta/delta/gamma/zeta family. In terms of assembly, cross-link to form 2 major subcomplexes: one consisting of SGCB, SGCD and SGCG and the other consisting of SGCB and SGCD. The association between SGCB and SGCG is particularly strong while SGCA is loosely associated with the other sarcoglycans. In terms of processing, disulfide bonds are present.

It localises to the cell membrane. The protein localises to the sarcolemma. It is found in the cytoplasm. Its subcellular location is the cytoskeleton. In terms of biological role, component of the sarcoglycan complex, a subcomplex of the dystrophin-glycoprotein complex which forms a link between the F-actin cytoskeleton and the extracellular matrix. The sequence is that of Beta-sarcoglycan (SGCB) from Mesocricetus auratus (Golden hamster).